Consider the following 488-residue polypeptide: Glutamyl-tRNA(Gln) amidotransferase subunit A (488 aa).

Active-site charge relay system residues include Lys-77 and Ser-152. Ser-176 (acyl-ester intermediate) is an active-site residue.

It belongs to the amidase family. GatA subfamily. In terms of assembly, heterotrimer of A, B and C subunits.

It carries out the reaction L-glutamyl-tRNA(Gln) + L-glutamine + ATP + H2O = L-glutaminyl-tRNA(Gln) + L-glutamate + ADP + phosphate + H(+). Functionally, allows the formation of correctly charged Gln-tRNA(Gln) through the transamidation of misacylated Glu-tRNA(Gln) in organisms which lack glutaminyl-tRNA synthetase. The reaction takes place in the presence of glutamine and ATP through an activated gamma-phospho-Glu-tRNA(Gln). In Latilactobacillus sakei subsp. sakei (strain 23K) (Lactobacillus sakei subsp. sakei), this protein is Glutamyl-tRNA(Gln) amidotransferase subunit A.